The primary structure comprises 199 residues: GTP cyclohydrolase 1 (199 aa).

C89, H92, and C161 together coordinate Zn(2+).

It belongs to the GTP cyclohydrolase I family. In terms of assembly, toroid-shaped homodecamer, composed of two pentamers of five dimers.

It carries out the reaction GTP + H2O = 7,8-dihydroneopterin 3'-triphosphate + formate + H(+). It participates in cofactor biosynthesis; 7,8-dihydroneopterin triphosphate biosynthesis; 7,8-dihydroneopterin triphosphate from GTP: step 1/1. The chain is GTP cyclohydrolase 1 from Bifidobacterium longum (strain NCC 2705).